The chain runs to 102 residues: Large ribosomal subunit protein uL24 (102 aa).

This sequence belongs to the universal ribosomal protein uL24 family. In terms of assembly, part of the 50S ribosomal subunit.

In terms of biological role, one of two assembly initiator proteins, it binds directly to the 5'-end of the 23S rRNA, where it nucleates assembly of the 50S subunit. Its function is as follows. One of the proteins that surrounds the polypeptide exit tunnel on the outside of the subunit. In Herpetosiphon aurantiacus (strain ATCC 23779 / DSM 785 / 114-95), this protein is Large ribosomal subunit protein uL24.